Consider the following 98-residue polypeptide: Cystatin-B (98 aa).

Residue methionine 1 is modified to N-acetylmethionine. The short motif at 46-50 (QLVAG) is the Secondary area of contact element.

This sequence belongs to the cystatin family. As to quaternary structure, able to form dimers stabilized by noncovalent forces.

The protein resides in the cytoplasm. In terms of biological role, this is an intracellular thiol proteinase inhibitor. This is Cystatin-B (CSTB) from Ovis aries (Sheep).